We begin with the raw amino-acid sequence, 621 residues long: (-)-beta-phellandrene synthase 1, chloroplastic (621 aa).

The transit peptide at 1–49 (MALALVSVAPLVSMRRSLFSSPYELKSIDKTIPNLVMCRKRMLGRPSIR) directs the protein to the chloroplast. Positions 372, 376, and 524 each coordinate Mg(2+). Positions 372–376 (DDIYD) match the DDXXD motif motif.

Belongs to the terpene synthase family. Tpsd subfamily. It depends on Mg(2+) as a cofactor. Mn(2+) serves as cofactor.

The protein resides in the plastid. The protein localises to the chloroplast. The enzyme catalyses (2E)-geranyl diphosphate = (-)-beta-phellandrene + diphosphate. The protein operates within terpene metabolism; oleoresin biosynthesis. It participates in secondary metabolite biosynthesis; terpenoid biosynthesis. In terms of biological role, monoterpene synthase (TPS) involved in the biosynthesis of monoterpene natural products included in conifer oleoresin secretions and volatile emissions; these compounds contribute to biotic and abiotic stress defense against herbivores and pathogens. Catalyzes the conversion of (2E)-geranyl diphosphate (GPP) to (-)-beta-phellandrene. This chain is (-)-beta-phellandrene synthase 1, chloroplastic, found in Pinus banksiana (Jack pine).